Reading from the N-terminus, the 95-residue chain is uncharacterized protein (95 aa).

This sequence belongs to the inositol monophosphatase superfamily.

This is an uncharacterized protein from Rhizobium leguminosarum bv. phaseoli.